Reading from the N-terminus, the 540-residue chain is MANPTSMSSAVHVYRRFVPQPVRSAAATTVPAGVRRKVKGGLARTLSRREARLHRRALRRVRRAGLGQSERRTTAPDGRIAHVHTGLTVDLARRLDHDLVTHALDAAEVPWFAVPALDDRRLCLAVEVRDKGTVRRVLRALLEEHTGYVVSVSPSAADTRETPGSHIKAWKHYGRARVIRLTWLRTDPTEGLWVGEDQGIEIEFWTANTDLPHERLIGPRPNRVQRAVPAEALGIEIGLDRLSGYCDIDGDLGPTVTLENFDVVRLEEISFPVDAVLLWQHPTPWGEELLRAALRSVHQYAPWIDVVHVVAQAEPPAWLEADERISVVRAVPGAEWRLDQLPDLAEHFLLMRPGALLGRPVRPFDYFTPGGGTRPRRGPWNASESFAEWVRAAYSVTGRATGHGYAAGPQPYRADTLTRLGEAGARSLPVPDEQVLSGVPGTHPMDGMAHHFGYVAGHADPSGEASVALHAALPGIGTHLQRLLVRRDVQQLQFFGLGTGEAGSGGGTNAVVRFLHQYYPVPSVFECDRPQTDTEPDRHS.

Belongs to the stealth family.

This Streptomyces coelicolor (strain ATCC BAA-471 / A3(2) / M145) protein is Exopolysaccharide phosphotransferase SCO6022.